The primary structure comprises 61 residues: Cecropin-D (61 aa).

An N-terminal signal peptide occupies residues 1-22; sequence MKFSKIFVFVFAIVFATASVSA. The propeptide at 23–24 is removed by a dipeptidylpeptidase; it reads AP. At glutamine 60 the chain carries Glutamine amide.

The protein belongs to the cecropin family. As to expression, mainly in fat body. Lower in hemocytes. Not expressed in midguts, malpighian tubules and silk glands.

It is found in the secreted. Functionally, cecropins have lytic and antibacterial activity against several Gram-positive and Gram-negative bacteria. The sequence is that of Cecropin-D (CECD) from Bombyx mori (Silk moth).